A 223-amino-acid chain; its full sequence is MKQEKTVSATLVNNPALTGRGTCCDDDECLNDPAQLPAEIMESMSESVYTLLEGVGEDPEREGLLKTPERVARSLAFLTRGYRQDPEEMLKKAVFTESYDEMVLVKDIDIFSMCEHHMLPFFGKAHVAYIPDGKIVGLSKLARVVEVFARRLQVQERLTQQIRDAIQDVLHPKGVGVVIEAKHMCMVMRGVEKLNSVTTTSAMSGEFISSESTRGEFLRLIRP.

Residues Cys-114, His-117, and Cys-185 each coordinate Zn(2+).

It belongs to the GTP cyclohydrolase I family. As to quaternary structure, homomer.

The catalysed reaction is GTP + H2O = 7,8-dihydroneopterin 3'-triphosphate + formate + H(+). The protein operates within cofactor biosynthesis; 7,8-dihydroneopterin triphosphate biosynthesis; 7,8-dihydroneopterin triphosphate from GTP: step 1/1. This chain is GTP cyclohydrolase 1, found in Chlorobium phaeovibrioides (strain DSM 265 / 1930) (Prosthecochloris vibrioformis (strain DSM 265)).